The primary structure comprises 366 residues: S-adenosylmethionine synthase 1 (366 aa).

Glu18 serves as a coordination point for K(+). L-methionine is bound by residues Glu31 and Gln74. Residues 142–144 (DGN), 210–213 (SGRF), Asp221, 227–228 (RK), Ala244, Lys248, and Lys252 contribute to the ATP site. Position 221 (Asp221) interacts with L-methionine. An L-methionine-binding site is contributed by Lys252.

This sequence belongs to the AdoMet synthase family. Homotetramer. Mn(2+) is required as a cofactor. Mg(2+) serves as cofactor. It depends on Co(2+) as a cofactor. Requires K(+) as cofactor.

The protein localises to the cytoplasm. The catalysed reaction is L-methionine + ATP + H2O = S-adenosyl-L-methionine + phosphate + diphosphate. Its pathway is amino-acid biosynthesis; S-adenosyl-L-methionine biosynthesis; S-adenosyl-L-methionine from L-methionine: step 1/1. Functionally, catalyzes the formation of S-adenosylmethionine from methionine and ATP. The reaction comprises two steps that are both catalyzed by the same enzyme: formation of S-adenosylmethionine (AdoMet) and triphosphate, and subsequent hydrolysis of the triphosphate. This is S-adenosylmethionine synthase 1 (SAMS1) from Pisum sativum (Garden pea).